Here is a 132-residue protein sequence, read N- to C-terminus: ATP synthase epsilon chain (132 aa).

The protein belongs to the ATPase epsilon chain family. F-type ATPases have 2 components, CF(1) - the catalytic core - and CF(0) - the membrane proton channel. CF(1) has five subunits: alpha(3), beta(3), gamma(1), delta(1), epsilon(1). CF(0) has three main subunits: a, b and c.

It is found in the cell inner membrane. Functionally, produces ATP from ADP in the presence of a proton gradient across the membrane. In Anaeromyxobacter sp. (strain K), this protein is ATP synthase epsilon chain.